The primary structure comprises 2849 residues: Polycystin-1-like protein 1 (2849 aa).

Residues 1-1748 (MAEEAAQNIS…SDISKLQSHP (1748 aa)) lie on the Extracellular side of the membrane. N-linked (GlcNAc...) asparagine glycosylation is found at asparagine 8, asparagine 295, asparagine 338, asparagine 376, asparagine 447, asparagine 482, asparagine 514, asparagine 605, asparagine 657, asparagine 751, asparagine 875, asparagine 926, and asparagine 937. 2 PKD domains span residues 508–590 (SVSV…VQKK) and 592–673 (VANR…VCEP). The 898-residue stretch at 674 to 1571 (CQPPLVKNMG…GEEDGLDNRR (898 aa)) folds into the REJ domain. The segment covering 970–987 (NLLPTEPGTADPDATTTP) has biased composition (low complexity). 2 disordered regions span residues 970-1068 (NLLP…PHLS) and 1081-1118 (IPSG…DPSL). Residues 1053-1068 (RSERSQPTHSPDPHLS) show a composition bias toward basic and acidic residues. Asparagine 1233, asparagine 1301, asparagine 1306, asparagine 1572, asparagine 1681, and asparagine 1716 each carry an N-linked (GlcNAc...) asparagine glycan. Positions 1587–1735 (QFTELSENPQ…ALLRRKLKAS (149 aa)) constitute a GAIN-B domain. A disulfide bond links cysteine 1691 and cysteine 1717. Positions 1691-1735 (CLFWDKREWKSERFSPQPGTSPEKVNCSYHRLAAFALLRRKLKAS) are GPS. The helical transmembrane segment at 1749–1769 (ENLLPSIFIMGSVILYGFLVA) threads the bilayer. The Cytoplasmic segment spans residues 1770–1956 (KSRQVDHHEK…SSSRYLHTPR (187 aa)). Residues 1796 to 1913 (QLYAVVIDTG…HDGRVERELT (118 aa)) form the PLAT domain. The chain crosses the membrane as a helical span at residues 1957–1977 (LTVSFSLLCVYACLTALVAAG). Residues 1978–1992 (GQEQPHLDVSPTLGS) lie on the Extracellular side of the membrane. The helical transmembrane segment at 1993-2013 (FRVGLLCTLLASPGAQLLSLL) threads the bilayer. At 2014 to 2135 (FRLSKEAPGS…SRALQPWWSS (122 aa)) the chain is on the cytoplasmic side. The tract at residues 2023–2089 (SARVEPHSPL…GTACPAPKLQ (67 aa)) is disordered. Residues 2136–2156 (AVWAICGTASLACSLGTGFLA) form a helical membrane-spanning segment. Residues 2157 to 2174 (YRFGQEQCVQWLHLLSLS) lie on the Extracellular side of the membrane. A helical membrane pass occupies residues 2175 to 2195 (VVCCIFITQPLMVCLMALGFA). The Cytoplasmic portion of the chain corresponds to 2196 to 2281 (WKRRADNHFF…QRMRRESRTR (86 aa)). The helical transmembrane segment at 2282–2302 (AALRDISMDILMLLLLLCVIY) threads the bilayer. Topologically, residues 2303-2522 (GRFSQDEYSL…FRSDSALQYH (220 aa)) are extracellular. Asparagine 2426 carries an N-linked (GlcNAc...) asparagine glycan. The helical transmembrane segment at 2523-2543 (LMLPQLVFLALSLIHLCVQLY) threads the bilayer. At 2544-2562 (RMMDKGVLSYWRKPRNWLE) the chain is on the cytoplasmic side. The helical transmembrane segment at 2563–2583 (LSVVGVSLTYYAVSGHLVTLA) threads the bilayer. At 2584-2616 (GDVTNQFHRGLCRAFMDLTLMASWNQRARWLRG) the chain is on the extracellular side. Residues 2617–2637 (ILLFLFTLKCVYLPGIQNTMA) traverse the membrane as a helical segment. Topologically, residues 2638 to 2646 (SCSSMMRHS) are cytoplasmic. A helical transmembrane segment spans residues 2647 to 2667 (LPSIFVAGLVGALMLAALSHL). Topologically, residues 2668–2711 (HRFLLSMWVLPPGTFTDAFPGLLFHFPRRSQKDCLLGLSKSDQR) are extracellular. Residues 2712 to 2732 (AMACYFGILLIVSATLCFGML) form a helical membrane-spanning segment. Topologically, residues 2733 to 2849 (RGFLMTLPQK…AAEPADIKDF (117 aa)) are cytoplasmic.

It belongs to the polycystin family. Heterodimer. Interacts with PKD2 to form a calcium channel. Interacts with PKD2L1; to form ciliary calcium channel. May interact with GNA12, GNAS, GNAI1 and GNAI2. Detected in testis and in fetal and adult heart.

The protein localises to the cell projection. It is found in the cilium membrane. Its function is as follows. Component of a calcium-permeant ion channel formed by PKD1L2 and PKD1L1 in primary cilia, where it controls cilium calcium concentration, without affecting cytoplasmic calcium concentration, and regulates sonic hedgehog/SHH signaling and GLI2 transcription. The PKD1L1:PKD2L1 channel complex is mechanosensitive only at high pressures and is highly temperature sensitive. Also involved in left/right axis specification downstream of nodal flow by forming a complex with PKD2 in cilia to facilitate flow detection in left/right patterning. May function as a G-protein-coupled receptor. In Homo sapiens (Human), this protein is Polycystin-1-like protein 1.